The sequence spans 43 residues: Neurotrophin-3 (43 aa).

This sequence belongs to the NGF-beta family.

The protein resides in the secreted. In terms of biological role, seems to promote the survival of visceral and proprioceptive sensory neurons. This chain is Neurotrophin-3 (ntf3), found in Raja clavata (Thornback ray).